The primary structure comprises 306 residues: Ubiquitin-conjugating enzyme E2Q-like protein CG4502 (306 aa).

Residues 18 to 77 (HKSSNNNNNNNNNHNNNINNNNNNDKVDGATGSSPNINNNNNNNNNNNNHDGAAAPSSAG) are disordered. Composition is skewed to low complexity over residues 22–41 (NNNN…NNNN) and 53–77 (NINN…SSAG). The UBC core domain maps to 138–299 (IRTRRLMKEY…VKTHEKYGWV (162 aa)). The active-site Glycyl thioester intermediate is C234.

This sequence belongs to the ubiquitin-conjugating enzyme family.

It carries out the reaction S-ubiquitinyl-[E1 ubiquitin-activating enzyme]-L-cysteine + [E2 ubiquitin-conjugating enzyme]-L-cysteine = [E1 ubiquitin-activating enzyme]-L-cysteine + S-ubiquitinyl-[E2 ubiquitin-conjugating enzyme]-L-cysteine.. It participates in protein modification; protein ubiquitination. Functionally, catalyzes the covalent attachment of ubiquitin to other proteins. This chain is Ubiquitin-conjugating enzyme E2Q-like protein CG4502, found in Drosophila melanogaster (Fruit fly).